The primary structure comprises 542 residues: Chaperonin GroEL (542 aa).

Residues 29–32 (TLGP), 86–90 (DGTTT), Gly-413, and Asp-494 each bind ATP.

Belongs to the chaperonin (HSP60) family. As to quaternary structure, forms a cylinder of 14 subunits composed of two heptameric rings stacked back-to-back. Interacts with the co-chaperonin GroES.

It localises to the cytoplasm. The enzyme catalyses ATP + H2O + a folded polypeptide = ADP + phosphate + an unfolded polypeptide.. Functionally, together with its co-chaperonin GroES, plays an essential role in assisting protein folding. The GroEL-GroES system forms a nano-cage that allows encapsulation of the non-native substrate proteins and provides a physical environment optimized to promote and accelerate protein folding. This Endomicrobium trichonymphae protein is Chaperonin GroEL.